The sequence spans 224 residues: CRIB domain-containing protein RIC1 (224 aa).

One can recognise a CRIB domain in the interval 29-42; it reads IGFPTDVKHVAHIG. A disordered region spans residues 38-224; sequence VAHIGSDGPT…SVDTTCNDII (187 aa). Composition is skewed to polar residues over residues 69-84, 114-132, 144-155, and 215-224; these read SRGNSNKYNPQGTNQR, PNHNGSPPRKSSGNAASSD, AHGSTDSSNDQE, and SVDTTCNDII.

As to quaternary structure, interacts with ARAC11/ROP1. As to expression, expressed in columella cells from the root tip and epidermal cells at the base of lateral roots, leaves, stems, flowers, anthers, pollen and siliques.

The protein resides in the cytoplasm. It localises to the cytoskeleton. Functionally, functions as a downstream effector of Rho-related GTP binding proteins of the 'Rho of Plants' (ROPs) family. Participates in the propagation of ROP GTPase signals in specific cellular responses. Required for cortical microtubule organization. Promotes microtubule bundling and formation of well-ordered microtubule arrays in the neck region of pavement cells. This restricts cell lateral expansion to generate the narrow neck morphology of pavement cells. Its function is inhibited when it interacts with activated ARAC4/ROP2. Represses ARAC4/ROP2 activation and antagonizes the RIC4-actin pathway that promotes the assembly of cortical actin microfilaments. Acts as a downstream effector of ARAC3/ROP6 which functions in a signaling pathway that negatively regulates clathrin-mediated endocytosis and internalization of PIN1 and PIN2. Required for the asymmetric auxin distribution during root gravitropism and vascular patterning. Positively regulates auxin responses, but negatively regulates ABA responses during lateral root development and primary root elongation. This Arabidopsis thaliana (Mouse-ear cress) protein is CRIB domain-containing protein RIC1 (RIC1).